We begin with the raw amino-acid sequence, 211 residues long: UPF0319 protein VC_A0026 (211 aa).

A signal peptide spans 1-21; it reads MKPMQRLTCLLALCFAASASA.

The protein belongs to the UPF0319 family.

The sequence is that of UPF0319 protein VC_A0026 from Vibrio cholerae serotype O1 (strain ATCC 39315 / El Tor Inaba N16961).